The primary structure comprises 311 residues: 4-hydroxy-tetrahydrodipicolinate synthase (311 aa).

Thr-51 is a binding site for pyruvate. Tyr-140 functions as the Proton donor/acceptor in the catalytic mechanism. Lys-168 (schiff-base intermediate with substrate) is an active-site residue. Ile-209 is a binding site for pyruvate.

Belongs to the DapA family. In terms of assembly, homotetramer; dimer of dimers.

The protein resides in the cytoplasm. It carries out the reaction L-aspartate 4-semialdehyde + pyruvate = (2S,4S)-4-hydroxy-2,3,4,5-tetrahydrodipicolinate + H2O + H(+). It participates in amino-acid biosynthesis; L-lysine biosynthesis via DAP pathway; (S)-tetrahydrodipicolinate from L-aspartate: step 3/4. In terms of biological role, catalyzes the condensation of (S)-aspartate-beta-semialdehyde [(S)-ASA] and pyruvate to 4-hydroxy-tetrahydrodipicolinate (HTPA). The polypeptide is 4-hydroxy-tetrahydrodipicolinate synthase (Streptococcus gordonii (strain Challis / ATCC 35105 / BCRC 15272 / CH1 / DL1 / V288)).